Consider the following 249-residue polypeptide: DNA polymerase sliding clamp 1 (249 aa).

Belongs to the PCNA family. As to quaternary structure, forms heterodimers with PCNA2, which then recruit PCNA3; does not form homotrimers. The heterodimers interact with RfcS homotetramers. Heterotrimer which circularizes head-to-tail (head is at N-terminus, tail is at C-terminus) to form a toroid; DNA passes through its center. Replication factor C (RFC) is required to load the toroid on the DNA. Heterotrimer interacts, probably via this subunit, with flap endonuclease 1 (fen), Hjc, Dpo4, and XPF.

Functionally, one of the sliding clamp subunits that acts as a moving platform for DNA processing. Responsible for tethering the catalytic subunit of DNA polymerase to DNA during high-speed replication. Heterotrimer stimulates the Holliday junction resolvase Hjc. DNA polymerase I, DNA ligase and the flap endonuclease may be constitutively associated with the PCNA heterotrimer forming a scanning complex able to couple DNA synthesis and Okazaki fragment maturation. The chain is DNA polymerase sliding clamp 1 from Saccharolobus solfataricus (strain ATCC 35092 / DSM 1617 / JCM 11322 / P2) (Sulfolobus solfataricus).